The following is a 742-amino-acid chain: Non-structural protein 1 (742 aa).

Disordered stretches follow at residues 14–46 (SAMSNHPSLTPTTTPTAATASTSTAPSIDSSTA) and 230–268 (LMSLPIASPPRSRSSTLSSSTSTSTPRLPGTVVPRRPSH). 2 stretches are compositionally biased toward low complexity: residues 20-46 (PSLTPTTTPTAATASTSTAPSIDSSTA) and 238-258 (PPRSRSSTLSSSTSTSTPRLP). Residues 635–700 (DLTAQLAIAE…HSAATAEAAA (66 aa)) adopt a coiled-coil conformation.

The protein belongs to the aquareoviridae NS1 protein family.

Functionally, non-structural protein with ssRNA-binding activity. Is probably involved in the formation of viral inclusions, where the assembly of cores and the replication of viral RNA are thought to occur. In Aquareovirus C (isolate Golden shiner/USA/GSRV/1977) (AQRV-C), this protein is Non-structural protein 1 (S4).